Reading from the N-terminus, the 605-residue chain is uncharacterized protein (605 aa).

Residues 22 to 93 (FTEPARFYPS…KQGTAVHGAE (72 aa)) are disordered. Residues 46 to 57 (SENASSSVPSHS) are compositionally biased toward low complexity.

This is an uncharacterized protein from Treponema pallidum (strain Nichols).